Reading from the N-terminus, the 259-residue chain is Thiazole synthase (259 aa).

The Schiff-base intermediate with DXP role is filled by Lys-98. 1-deoxy-D-xylulose 5-phosphate is bound by residues Gly-159, 185-186 (AG), and 207-208 (NS).

The protein belongs to the ThiG family. As to quaternary structure, homotetramer. Forms heterodimers with either ThiH or ThiS.

It is found in the cytoplasm. The catalysed reaction is [ThiS sulfur-carrier protein]-C-terminal-Gly-aminoethanethioate + 2-iminoacetate + 1-deoxy-D-xylulose 5-phosphate = [ThiS sulfur-carrier protein]-C-terminal Gly-Gly + 2-[(2R,5Z)-2-carboxy-4-methylthiazol-5(2H)-ylidene]ethyl phosphate + 2 H2O + H(+). Its pathway is cofactor biosynthesis; thiamine diphosphate biosynthesis. Functionally, catalyzes the rearrangement of 1-deoxy-D-xylulose 5-phosphate (DXP) to produce the thiazole phosphate moiety of thiamine. Sulfur is provided by the thiocarboxylate moiety of the carrier protein ThiS. In vitro, sulfur can be provided by H(2)S. This chain is Thiazole synthase, found in Chlorobium limicola (strain DSM 245 / NBRC 103803 / 6330).